Consider the following 436-residue polypeptide: ATP-dependent RNA helicase SUB2 (436 aa).

Residues 1 to 16 (MSAEEDLIDYSDEELN) are compositionally biased toward acidic residues. A disordered region spans residues 1-33 (MSAEEDLIDYSDEELNTNETAAPAADSNGKKGE). The short motif at 52-80 (TGFRDFLLKPELLRAIGDCGFEHPSEVQQ) is the Q motif element. The 176-residue stretch at 83 to 258 (IPQAMLGGDI…KKFMQNPTEH (176 aa)) folds into the Helicase ATP-binding domain. 96-103 (AKSGLGKT) is an ATP binding site. The DEAD box signature appears at 205–208 (DECD). The Helicase C-terminal domain maps to 270–431 (GLQQYFVALE…EFPKDGIDAS (162 aa)).

Belongs to the DEAD box helicase family. DECD subfamily.

It localises to the nucleus. It catalyses the reaction ATP + H2O = ADP + phosphate + H(+). In terms of biological role, ATP-binding RNA helicase involved in transcription elongation and required for the export of mRNA out of the nucleus. SUB2 also plays a role in pre-mRNA splicing and spliceosome assembly. May be involved in rDNA and telomeric silencing, and maintenance of genome integrity. The chain is ATP-dependent RNA helicase SUB2 (SUB2) from Pyricularia oryzae (strain 70-15 / ATCC MYA-4617 / FGSC 8958) (Rice blast fungus).